The chain runs to 124 residues: Large ribosomal subunit protein uL14 (124 aa).

It belongs to the universal ribosomal protein uL14 family. In terms of assembly, part of the 50S ribosomal subunit. Forms a cluster with proteins L3 and L19. In the 70S ribosome, L14 and L19 interact and together make contacts with the 16S rRNA in bridges B5 and B8.

In terms of biological role, binds to 23S rRNA. Forms part of two intersubunit bridges in the 70S ribosome. The sequence is that of Large ribosomal subunit protein uL14 from Mycoplasmoides gallisepticum (strain R(low / passage 15 / clone 2)) (Mycoplasma gallisepticum).